Consider the following 540-residue polypeptide: 2-succinyl-5-enolpyruvyl-6-hydroxy-3-cyclohexene-1-carboxylate synthase (540 aa).

It belongs to the TPP enzyme family. MenD subfamily. In terms of assembly, homodimer. It depends on Mg(2+) as a cofactor. The cofactor is Mn(2+). Thiamine diphosphate serves as cofactor.

The enzyme catalyses isochorismate + 2-oxoglutarate + H(+) = 5-enolpyruvoyl-6-hydroxy-2-succinyl-cyclohex-3-ene-1-carboxylate + CO2. The protein operates within quinol/quinone metabolism; 1,4-dihydroxy-2-naphthoate biosynthesis; 1,4-dihydroxy-2-naphthoate from chorismate: step 2/7. Its pathway is quinol/quinone metabolism; menaquinone biosynthesis. Its function is as follows. Catalyzes the thiamine diphosphate-dependent decarboxylation of 2-oxoglutarate and the subsequent addition of the resulting succinic semialdehyde-thiamine pyrophosphate anion to isochorismate to yield 2-succinyl-5-enolpyruvyl-6-hydroxy-3-cyclohexene-1-carboxylate (SEPHCHC). This Mycobacteroides abscessus (strain ATCC 19977 / DSM 44196 / CCUG 20993 / CIP 104536 / JCM 13569 / NCTC 13031 / TMC 1543 / L948) (Mycobacterium abscessus) protein is 2-succinyl-5-enolpyruvyl-6-hydroxy-3-cyclohexene-1-carboxylate synthase.